Consider the following 186-residue polypeptide: UPF0398 protein BPUM_1952 (186 aa).

It belongs to the UPF0398 family.

This Bacillus pumilus (strain SAFR-032) protein is UPF0398 protein BPUM_1952.